A 327-amino-acid chain; its full sequence is GTPase Obg (327 aa).

The Obg domain occupies 1-159 (MQFIDQANII…WEVQLELKLL (159 aa)). The OBG-type G domain occupies 160-327 (AEVGIIGLPN…SLLFEVWKRI (168 aa)). Residues 166–173 (GLPNAGKS), 191–195 (FTTLI), 213–216 (DIPG), 280–283 (NKME), and 309–311 (SSS) contribute to the ATP site. Mg(2+) contacts are provided by serine 173 and threonine 193.

It belongs to the TRAFAC class OBG-HflX-like GTPase superfamily. OBG GTPase family. In terms of assembly, monomer. The cofactor is Mg(2+).

Its subcellular location is the cytoplasm. Its function is as follows. An essential GTPase which binds GTP, GDP and possibly (p)ppGpp with moderate affinity, with high nucleotide exchange rates and a fairly low GTP hydrolysis rate. Plays a role in control of the cell cycle, stress response, ribosome biogenesis and in those bacteria that undergo differentiation, in morphogenesis control. The chain is GTPase Obg from Prochlorococcus marinus (strain MIT 9312).